The chain runs to 334 residues: Protein CUP-SHAPED COTYLEDON 3 (334 aa).

The NAC domain occupies 22-171 (LPPGFRFHPT…EWVICRVFNK (150 aa)). A DNA-binding region spans residues 121 to 177 (VGMKKTLVFYKGRAPRGLKTKWVMHEYRLENDHSHRHTCKEEWVICRVFNKTGDRKN).

In a general manner, present at the boundaries between mersitems and araising primordia.

Its subcellular location is the nucleus. Functionally, transcription activator. Involved in molecular mechanisms regulating shoot apical meristem (SAM) formation during embryogenesis and organ separation. Required for axillary meristem initiation and separation of the meristem from the main stem. May act as an inhibitor of cell division. In Arabidopsis thaliana (Mouse-ear cress), this protein is Protein CUP-SHAPED COTYLEDON 3 (NAC031).